Reading from the N-terminus, the 83-residue chain is Transmembrane protein EP84R (83 aa).

Helical transmembrane passes span 31–51 (VIGIILLVISLLLIFIGIIIL) and 59–79 (AGSVLVVLSLILGGGGFFLIY).

It belongs to the asfivirus EP84R family.

The protein localises to the virion membrane. The polypeptide is Transmembrane protein EP84R (Ornithodoros (relapsing fever ticks)).